The chain runs to 467 residues: Asparagine--tRNA ligase (467 aa).

It belongs to the class-II aminoacyl-tRNA synthetase family. Homodimer.

Its subcellular location is the cytoplasm. The catalysed reaction is tRNA(Asn) + L-asparagine + ATP = L-asparaginyl-tRNA(Asn) + AMP + diphosphate + H(+). This Legionella pneumophila (strain Corby) protein is Asparagine--tRNA ligase.